Reading from the N-terminus, the 867-residue chain is G-protein coupled receptor family C group 6 member A (867 aa).

The N-terminal stretch at 1-19 (MDLMSFILLWAGLMKVAEA) is a signal peptide. Over 20–566 (SIAQFSQLGA…EYFDWNSGFA (547 aa)) the chain is Extracellular. N-linked (GlcNAc...) asparagine glycosylation is found at N51, N55, N97, N296, N308, N336, N356, N370, N527, and N547. The helical transmembrane segment at 567-587 (IVLLILAALGVLLLFFMSALF) threads the bilayer. The Cytoplasmic segment spans residues 588–602 (FWQRHSPVVKAAGGP). The helical transmembrane segment at 603 to 623 (LCHLILVSLLGSFISVVFFVG) threads the bilayer. Topologically, residues 624–634 (EPSDLTCRARQ) are extracellular. A helical transmembrane segment spans residues 635–655 (VIFGFSFTLCVSCILVKSLKI). Topologically, residues 656–675 (LLAFEMNFELKELLCMLYKP) are cytoplasmic. Residues 676-696 (YMIVSVGMGVQIIICTVWLTL) traverse the membrane as a helical segment. Residues 697 to 716 (YKPFKDKEVQTESILLECNE) are Extracellular-facing. A helical membrane pass occupies residues 717–737 (GFYVMFWLMLGYIALLALFCF). Topologically, residues 738–754 (TFAYIGRKLPQKYNEAK) are cytoplasmic. Residues 755–775 (FITFSMVICLMAWIIFIPIHV) traverse the membrane as a helical segment. At 776 to 781 (TTSGKY) the chain is on the extracellular side. A helical membrane pass occupies residues 782–802 (VPAVEMVVILISNYGILSCHF). The Cytoplasmic portion of the chain corresponds to 803–867 (LPKSYIILFK…LSFVPEEKHE (65 aa)).

Belongs to the G-protein coupled receptor 3 family. Homodimer; disulfide-linked.

Its subcellular location is the cell membrane. Olfactory receptor that is activated by amino acids that act as potent odorants in fish. Displays preference for acidic amino acids such as Glu over basic amino acids. This Danio rerio (Zebrafish) protein is G-protein coupled receptor family C group 6 member A (gprc6a).